The chain runs to 445 residues: Histidine--tRNA ligase (445 aa).

Belongs to the class-II aminoacyl-tRNA synthetase family. Homodimer.

It is found in the cytoplasm. The catalysed reaction is tRNA(His) + L-histidine + ATP = L-histidyl-tRNA(His) + AMP + diphosphate + H(+). The polypeptide is Histidine--tRNA ligase (Mycoplasma mobile (strain ATCC 43663 / 163K / NCTC 11711) (Mesomycoplasma mobile)).